Reading from the N-terminus, the 349-residue chain is Ethyl acetate hydrolase (349 aa).

The 234-residue stretch at 67–300 (YIGEGRALDP…SHDQFFTVDD (234 aa)) folds into the AB hydrolase-1 domain. Catalysis depends on Ser139, which acts as the Nucleophile. Active-site residues include Asp293 and His322.

The protein belongs to the AB hydrolase superfamily. Acetyl esterase family. As to quaternary structure, homodimer.

It carries out the reaction ethyl acetate + H2O = ethanol + acetate + H(+). Functionally, esterase that catalyzes the hydrolysis of ethyl acetate. Involved in the degradation of short chain methyl ketones (MEK) such as 2-butanone and 2-hexanone. In vitro, can also hydrolyze vinyl acetate, 4-nitrophenyl acetate, methyl acetate, propyl acetate, benzyl acetate and methyl propionate. The highest activities are obtained with acetic acid esters, but the alcohol group also plays an important role, as compounds with two carbon atoms in the alcohol moiety, i.e., vinyl and ethyl acetate, are by far the preferred substrates. The chain is Ethyl acetate hydrolase from Pseudomonas veronii.